A 212-amino-acid polypeptide reads, in one-letter code: Thymidylate kinase (212 aa).

10–17 (GPDGAGKT) provides a ligand contact to ATP.

It belongs to the thymidylate kinase family.

The enzyme catalyses dTMP + ATP = dTDP + ADP. In terms of biological role, phosphorylation of dTMP to form dTDP in both de novo and salvage pathways of dTTP synthesis. The protein is Thymidylate kinase of Exiguobacterium sibiricum (strain DSM 17290 / CCUG 55495 / CIP 109462 / JCM 13490 / 255-15).